The chain runs to 406 residues: Probable endo-xylogalacturonan hydrolase A (406 aa).

Residues Met1–Ala18 form the signal peptide. Residues Pro20–Asp49 form a disordered region. PbH1 repeat units follow at residues Thr183–Ala213, Ser214–Pro235, Ala237–Ser257, Val266–Pro289, Val299–Ser320, and Thr368–Gly390. Catalysis depends on Asp228, which acts as the Proton donor. The N-linked (GlcNAc...) asparagine glycan is linked to Asn244. The active site involves His251. N-linked (GlcNAc...) asparagine glycosylation is found at Asn273, Asn278, and Asn301.

The protein belongs to the glycosyl hydrolase 28 family.

Its subcellular location is the secreted. In terms of biological role, pectinolytic enzyme involved in the degradation of xylogalacturonan (xga), a galacturonan backbone heavily substituted with xylose, and which is one important component of the hairy regions of pectin. Activity requires a galacturonic acid backbone substituted with xylose. This Aspergillus oryzae (strain ATCC 42149 / RIB 40) (Yellow koji mold) protein is Probable endo-xylogalacturonan hydrolase A (xghA).